We begin with the raw amino-acid sequence, 266 residues long: Glucosamine-6-phosphate deaminase (266 aa).

The Proton acceptor; for enolization step role is filled by aspartate 72. Aspartate 141 serves as the catalytic For ring-opening step. Residue histidine 143 is the Proton acceptor; for ring-opening step of the active site. Catalysis depends on glutamate 148, which acts as the For ring-opening step.

The protein belongs to the glucosamine/galactosamine-6-phosphate isomerase family. NagB subfamily. Homohexamer.

It carries out the reaction alpha-D-glucosamine 6-phosphate + H2O = beta-D-fructose 6-phosphate + NH4(+). It participates in amino-sugar metabolism; N-acetylneuraminate degradation; D-fructose 6-phosphate from N-acetylneuraminate: step 5/5. With respect to regulation, allosterically activated by N-acetylglucosamine 6-phosphate (GlcNAc6P). Its function is as follows. Catalyzes the reversible isomerization-deamination of glucosamine 6-phosphate (GlcN6P) to form fructose 6-phosphate (Fru6P) and ammonium ion. This is Glucosamine-6-phosphate deaminase from Erwinia tasmaniensis (strain DSM 17950 / CFBP 7177 / CIP 109463 / NCPPB 4357 / Et1/99).